We begin with the raw amino-acid sequence, 83 residues long: RNA-binding protein Hfq (83 aa).

Positions 10-70 constitute a Sm domain; that stretch reads DTFLNQVRKE…ISTVMPLRPI (61 aa).

The protein belongs to the Hfq family. In terms of assembly, homohexamer.

In terms of biological role, RNA chaperone that binds small regulatory RNA (sRNAs) and mRNAs to facilitate mRNA translational regulation in response to envelope stress, environmental stress and changes in metabolite concentrations. Also binds with high specificity to tRNAs. This chain is RNA-binding protein Hfq, found in Desulfitobacterium hafniense (strain Y51).